A 254-amino-acid polypeptide reads, in one-letter code: UPF0246 protein lpp1320 (254 aa).

This sequence belongs to the UPF0246 family.

This is UPF0246 protein lpp1320 from Legionella pneumophila (strain Paris).